Reading from the N-terminus, the 1049-residue chain is Protein phosphatase 1 regulatory subunit 12A (1049 aa).

ANK repeat units follow at residues 39-68 (DDGAVFLAACSSGDTEEVLRMLDRGADINY), 72-101 (DGLTALHQACIDDNVDMVTFLVEHGACINQ), 105-134 (EGWIPLHAAASCGYLDIAEYLISQGASVGV), 138-164 (EGETPLDIAEEEAMEELLQNEINRQGV), 198-227 (SGGTALHVAAAKGYAEVLKLLIQAGYDVNI), and 231-260 (DGWTPLHAAAHWGKEEACRILVEHLCDMDV). Residues 302–947 (LIETTTTGDN…RPYSRFEKDD (646 aa)) form a disordered region. Positions 303–315 (IETTTTGDNNQSV) are enriched in polar residues. Residues 319–341 (KSKETLLLEPEKTAPRIETLEPE) show a composition bias toward basic and acidic residues. Residues 359-371 (SEEEEEEDSESEN) are compositionally biased toward acidic residues. The segment covering 378–421 (SSVPSSVSNSTPTTAPSSITVTSPTTPSNQVTTPTSPTKKVSTP) has biased composition (low complexity). The segment covering 426 to 436 (SPKEEDRKDES) has biased composition (basic and acidic residues). Over residues 473–484 (RSASSPRLSSSL) the composition is skewed to low complexity. Basic and acidic residues predominate over residues 485–497 (DNKDKEKEKEKTR). Residues 545–564 (SDGTASTNRTSSYQRSTSHT) are compositionally biased toward polar residues. The segment covering 571 to 592 (SSSRDLPAKSSSASSLEPNNSK) has biased composition (low complexity). Residues 593 to 607 (AWQPSSYYQSYSIHR) are compositionally biased toward polar residues. A compositionally biased stretch (low complexity) spans 620-639 (SSTSSSTTTTTTTSSVTSPT). Positions 649-664 (WAEESAEKEKEKEKES) are enriched in basic and acidic residues. Low complexity predominate over residues 665–686 (ATVIPTINTAGTTTTTSTTGTV). The span at 702 to 711 (VRDEESESQR) shows a compositional bias: basic and acidic residues. The segment covering 712-722 (KARSRQARQSR) has biased composition (basic residues). Positions 747–789 (RPREDEKEEKEKQDKEKQEEKKETETKEDDYRSRYRSFEEKYR) are enriched in basic and acidic residues. The span at 790–819 (TSLASSTTASSTIPSSSSSSSSSLYSTSSL) shows a compositional bias: low complexity. The segment covering 820 to 829 (NRPNSLTGLT) has biased composition (polar residues). The span at 835–863 (STRDTDRESDRKEKDEDRDGDDKSQPRSI) shows a compositional bias: basic and acidic residues. The segment covering 864-875 (RDRRRPREKRRS) has biased composition (basic residues). Composition is skewed to basic and acidic residues over residues 890–906 (PDHPSDSEGSTKGEPQS) and 934–947 (GESRRPYSRFEKDD).

PP1 comprises a catalytic subunit, and one or several targeting or regulatory subunits. Ppp1r12a mediates binding to myosin.

The protein localises to the cytoplasm. Functionally, regulates myosin phosphatase activity. The chain is Protein phosphatase 1 regulatory subunit 12A (ppp1r12a) from Danio rerio (Zebrafish).